Consider the following 546-residue polypeptide: Chaperonin GroEL (546 aa).

ATP contacts are provided by residues 30-33, Lys-51, 87-91, Gly-415, and Asp-495; these read TLGP and DGTTT.

The protein belongs to the chaperonin (HSP60) family. In terms of assembly, forms a cylinder of 14 subunits composed of two heptameric rings stacked back-to-back. Interacts with the co-chaperonin GroES.

It localises to the cytoplasm. It catalyses the reaction ATP + H2O + a folded polypeptide = ADP + phosphate + an unfolded polypeptide.. Its function is as follows. Together with its co-chaperonin GroES, plays an essential role in assisting protein folding. The GroEL-GroES system forms a nano-cage that allows encapsulation of the non-native substrate proteins and provides a physical environment optimized to promote and accelerate protein folding. The sequence is that of Chaperonin GroEL from Brucella melitensis biotype 2 (strain ATCC 23457).